The sequence spans 108 residues: Nucleoid-associated protein Lcho_1975 (108 aa).

The protein belongs to the YbaB/EbfC family. In terms of assembly, homodimer.

The protein localises to the cytoplasm. The protein resides in the nucleoid. Its function is as follows. Binds to DNA and alters its conformation. May be involved in regulation of gene expression, nucleoid organization and DNA protection. In Leptothrix cholodnii (strain ATCC 51168 / LMG 8142 / SP-6) (Leptothrix discophora (strain SP-6)), this protein is Nucleoid-associated protein Lcho_1975.